We begin with the raw amino-acid sequence, 1304 residues long: Splicing factor 3B subunit 1 (1304 aa).

2 disordered regions span residues 100-119 (QYDP…EDEY) and 124-148 (RTMI…PKMN). Basic and acidic residues predominate over residues 104 to 119 (FAEHRPPKIADREDEY). T125 carries the phosphothreonine modification. At S129 the chain carries Phosphoserine. N6-acetyllysine is present on K141. A Phosphothreonine modification is found at T142. R157 is subject to Citrulline. Positions 172 to 360 (LAEKAKAGEL…PVLTPGKTPI (189 aa)) are disordered. S194 is modified (phosphoserine). A phosphothreonine mark is found at T203, T207, and T211. The residue at position 214 (K214) is an N6-acetyllysine; alternate. K214 participates in a covalent cross-link: Glycyl lysine isopeptide (Lys-Gly) (interchain with G-Cter in SUMO2); alternate. A phosphothreonine mark is found at T223 and T227. The interval 223–491 (TPGHTPSLRW…VDESTLSPEE (269 aa)) is interaction with PPP1R8. S229 is modified (phosphoserine). Over residues 231 to 241 (RWDETPGRAKG) the composition is skewed to basic and acidic residues. T235, T244, T248, T257, T261, T267, T273, and T278 each carry phosphothreonine. A Phosphoserine modification is found at S287. The span at 291–304 (NRWDETPKTERDTP) shows a compositional bias: basic and acidic residues. Phosphothreonine occurs at positions 296, 299, 303, and 313. S322 carries the phosphoserine modification. 2 positions are modified to phosphothreonine: T326 and T328. S332 is modified (phosphoserine). Residue T341 is modified to Phosphothreonine. The span at 342 to 352 (PASQMGGSTPV) shows a compositional bias: polar residues. S344 and S349 each carry phosphoserine. A phosphothreonine mark is found at T350 and T354. The residue at position 400 (S400) is a Phosphoserine. Residue K413 forms a Glycyl lysine isopeptide (Lys-Gly) (interchain with G-Cter in SUMO2); alternate linkage. K413 participates in a covalent cross-link: Glycyl lysine isopeptide (Lys-Gly) (interchain with G-Cter in SUMO1); alternate. Position 426 is a phosphothreonine (T426). Residue K430 forms a Glycyl lysine isopeptide (Lys-Gly) (interchain with G-Cter in SUMO2) linkage. T434 is modified (phosphothreonine; by DYRK1A). A Phosphothreonine modification is found at T436. S488 bears the Phosphoserine mark. HEAT repeat units lie at residues 529–568 (GPLF…DLVR), 569–603 (PYVH…LAKA), 604–641 (AGLA…ALGI), 643–677 (SLLP…LMGC), 680–718 (LPHL…AATP), 763–801 (NYYT…TDGV), 843–881 (KVGA…NLGA), 1010–1048 (TPPI…RGAE), 1052–1090 (AREW…AIGP), 1122–1160 (TCSP…YIGE), and 1163–1201 (KDYI…GVYG). An interaction with PHF5A region spans residues 547 to 550 (QERH). Residues K554 and K562 each carry the N6-acetyllysine modification. Residues 1156 to 1157 (EY) form an interaction with PHF5A region. The interval 1248 to 1304 (QYCLQGLFHPARKVRDVYWKIYNSIYIGSQDALIAHYPRIYNDDKNTYIRYDLDYIL) is interaction with SF3B3 and SF3B5.

Belongs to the SF3B1 family. As to quaternary structure, component of the 17S U2 SnRNP complex, a ribonucleoprotein complex that contains small nuclear RNA (snRNA) U2 and a number of specific proteins. Part of the SF3B subcomplex of the 17S U2 SnRNP complex. SF3B associates with the splicing subcomplex SF3A and a 12S RNA unit to form the U2 small nuclear ribonucleoproteins complex (U2 snRNP). Within the SF3B complex, interacts directly (via HEAT domain) with SF3B3, SF3B5, SF3B6 and (via HEAT domain) with PHF5A. The SF3B subcomplex interacts with U2AF2. Identified in the spliceosome C complex. Component of the minor (U12-type spliceosome) spliceosome. Within the minor spliceosome complex, interacts with SCNM1 and CRIPT. Component of the B-WICH complex, at least composed of SMARCA5/SNF2H, BAZ1B/WSTF, SF3B1, DEK, MYO1C, ERCC6, MYBBP1A and DDX21. Phosphorylated form interacts with PPP1R8. Interacts with PQBP1. Interacts with RBM17. Interacts with RBM39. Interacts with SETX. Interacts with RBM15. Interacts with USH1G. Interacts with SDE2. Interacts with U2AF1. Interacts with CACTIN. Interacts with ZRSR1. Interacts with CYREN. Phosphorylated. Phosphorylation occurs concomitantly with the splicing catalytic steps. Phosphorylation on Thr-244, Thr-248 and Thr-313 by cyclin-dependent kinases promotes interaction with PPP1R8 during mitosis. Post-translationally, citrullinated by PADI4. Ubiquitous.

It localises to the nucleus. It is found in the nucleus speckle. Component of the 17S U2 SnRNP complex of the spliceosome, a large ribonucleoprotein complex that removes introns from transcribed pre-mRNAs. The 17S U2 SnRNP complex (1) directly participates in early spliceosome assembly and (2) mediates recognition of the intron branch site during pre-mRNA splicing by promoting the selection of the pre-mRNA branch-site adenosine, the nucleophile for the first step of splicing. Within the 17S U2 SnRNP complex, SF3B1 is part of the SF3B subcomplex, which is required for 'A' complex assembly formed by the stable binding of U2 snRNP to the branchpoint sequence in pre-mRNA. Sequence independent binding of SF3A and SF3B subcomplexes upstream of the branch site is essential, it may anchor U2 snRNP to the pre-mRNA. May also be involved in the assembly of the 'E' complex. Also acts as a component of the minor spliceosome, which is involved in the splicing of U12-type introns in pre-mRNAs. Together with other U2 snRNP complex components may also play a role in the selective processing of microRNAs (miRNAs) from the long primary miRNA transcript, pri-miR-17-92. The sequence is that of Splicing factor 3B subunit 1 from Mus musculus (Mouse).